Reading from the N-terminus, the 604-residue chain is Glutamine--fructose-6-phosphate aminotransferase [isomerizing] (604 aa).

Cysteine 2 acts as the Nucleophile; for GATase activity in catalysis. Residues 2-218 (CGIVGVVGNR…DKELVILTKD (217 aa)) form the Glutamine amidotransferase type-2 domain. 2 consecutive SIS domains span residues 284–423 (IITS…ANGK) and 456–594 (VQAL…VDKP). The active-site For Fru-6P isomerization activity is the lysine 599.

Homodimer.

The protein localises to the cytoplasm. It catalyses the reaction D-fructose 6-phosphate + L-glutamine = D-glucosamine 6-phosphate + L-glutamate. In terms of biological role, catalyzes the first step in hexosamine metabolism, converting fructose-6P into glucosamine-6P using glutamine as a nitrogen source. The chain is Glutamine--fructose-6-phosphate aminotransferase [isomerizing] from Streptococcus pyogenes serotype M18 (strain MGAS8232).